We begin with the raw amino-acid sequence, 688 residues long: Polyribonucleotide nucleotidyltransferase (688 aa).

Residues aspartate 484 and aspartate 490 each coordinate Mg(2+). Positions 550–609 (PTTEIFNVAPDKIVEIIGQGGRVIKEIVEKFEVKIDLNKPSGEVKIMGNKERVLKTKEFI) constitute a KH domain. Residues 626–688 (DEVLEAQVKR…NKGKIALDLA (63 aa)) enclose the S1 motif domain.

Belongs to the polyribonucleotide nucleotidyltransferase family. Mg(2+) serves as cofactor.

The protein resides in the cytoplasm. It carries out the reaction RNA(n+1) + phosphate = RNA(n) + a ribonucleoside 5'-diphosphate. Its function is as follows. Involved in mRNA degradation. Catalyzes the phosphorolysis of single-stranded polyribonucleotides processively in the 3'- to 5'-direction. This Helicobacter pylori (strain G27) protein is Polyribonucleotide nucleotidyltransferase.